An 835-amino-acid chain; its full sequence is Leucine--tRNA ligase (835 aa).

Residues 41-52 carry the 'HIGH' region motif; that stretch reads PYPSGQGLHVGH. Positions 611–615 match the 'KMSKS' region motif; it reads KMSKS. Lys-614 serves as a coordination point for ATP.

The protein belongs to the class-I aminoacyl-tRNA synthetase family.

It is found in the cytoplasm. The catalysed reaction is tRNA(Leu) + L-leucine + ATP = L-leucyl-tRNA(Leu) + AMP + diphosphate. This is Leucine--tRNA ligase from Elusimicrobium minutum (strain Pei191).